We begin with the raw amino-acid sequence, 53 residues long: uncharacterized protein (53 aa).

A helical membrane pass occupies residues Leu24–Leu44.

Its subcellular location is the membrane. This is an uncharacterized protein from Methanocaldococcus jannaschii (strain ATCC 43067 / DSM 2661 / JAL-1 / JCM 10045 / NBRC 100440) (Methanococcus jannaschii).